Reading from the N-terminus, the 184-residue chain is ATP synthase subunit b, chloroplastic (184 aa).

A helical transmembrane segment spans residues 29-49 (INIINLGIVIGLLVYLGEGVL).

It belongs to the ATPase B chain family. In terms of assembly, F-type ATPases have 2 components, F(1) - the catalytic core - and F(0) - the membrane proton channel. F(1) has five subunits: alpha(3), beta(3), gamma(1), delta(1), epsilon(1). F(0) has four main subunits: a(1), b(1), b'(1) and c(10-14). The alpha and beta chains form an alternating ring which encloses part of the gamma chain. F(1) is attached to F(0) by a central stalk formed by the gamma and epsilon chains, while a peripheral stalk is formed by the delta, b and b' chains.

It localises to the plastid. The protein localises to the chloroplast thylakoid membrane. Its function is as follows. F(1)F(0) ATP synthase produces ATP from ADP in the presence of a proton or sodium gradient. F-type ATPases consist of two structural domains, F(1) containing the extramembraneous catalytic core and F(0) containing the membrane proton channel, linked together by a central stalk and a peripheral stalk. During catalysis, ATP synthesis in the catalytic domain of F(1) is coupled via a rotary mechanism of the central stalk subunits to proton translocation. In terms of biological role, component of the F(0) channel, it forms part of the peripheral stalk, linking F(1) to F(0). This is ATP synthase subunit b, chloroplastic from Psilotum nudum (Whisk fern).